Reading from the N-terminus, the 152-residue chain is Siroheme decarboxylase beta subunit (152 aa).

It belongs to the Ahb/Nir family. In terms of assembly, forms a heterodimer composed of AhbA and AhbB.

The catalysed reaction is siroheme + 2 H(+) = 12,18-didecarboxysiroheme + 2 CO2. It participates in porphyrin-containing compound metabolism; protoheme biosynthesis. With respect to regulation, binds heme b. The redox state of the heme b modulates the activity of the enzyme. Activity is stimulated by sodium dithionite. Involved in siroheme-dependent heme b biosynthesis. Catalyzes the decarboxylation of siroheme into didecarboxysiroheme. In Methanosarcina barkeri (strain Fusaro / DSM 804), this protein is Siroheme decarboxylase beta subunit.